A 129-amino-acid polypeptide reads, in one-letter code: Protein Turandot A1 (129 aa).

The first 21 residues, 1-21 (MNSSTALMCFALLLISPLCMG), serve as a signal peptide directing secretion. Residue Asn-49 is glycosylated (N-linked (GlcNAc...) asparagine).

This sequence belongs to the Turandot family.

It is found in the secreted. Functionally, a humoral factor that plays a role in stress tolerance; gives increased resistance to the lethal effects of bacterial challenge and stress. Regulated by the JAK/STAT pathway and NF-KB-like Relish pathway in the fat body, upd3 in the hemocytes and Mekk1 in response to septic injury and consequent immune response. The protein is Protein Turandot A1 (TotA1) of Drosophila simulans (Fruit fly).